The sequence spans 475 residues: Rho GTPase-activating protein 15 (475 aa).

The tract at residues 1 to 22 (MERSTTSDTASEKPNPSHSTGA) is disordered. In terms of domain architecture, PH spans 80–190 (VVEKEGYLLK…WFHAIKNAID (111 aa)). In terms of domain architecture, Rho-GAP spans 281–470 (SHLHLVCEHE…LMLSEYSKIF (190 aa)).

Its subcellular location is the cytoplasm. It is found in the membrane. Its function is as follows. GTPase activator for the Rho-type GTPases by converting them to an inactive GDP-bound state. This is Rho GTPase-activating protein 15 (ARHGAP15) from Gallus gallus (Chicken).